The following is a 448-amino-acid chain: Adenylosuccinate synthetase (448 aa).

GTP is bound by residues 36 to 42 (GDEGKGK) and 64 to 66 (GHT). The active-site Proton acceptor is Asp-37. Residues Asp-37 and Gly-64 each contribute to the Mg(2+) site. IMP-binding positions include 37-40 (DEGK), 62-65 (NAGH), Thr-154, Arg-168, Asn-246, Thr-261, and Arg-325. His-65 acts as the Proton donor in catalysis. 321 to 327 (VTTKRKR) is a binding site for substrate. GTP-binding positions include Arg-327, 353-355 (KLD), and 436-438 (GVG).

The protein belongs to the adenylosuccinate synthetase family. In terms of assembly, homodimer. It depends on Mg(2+) as a cofactor.

It localises to the cytoplasm. It catalyses the reaction IMP + L-aspartate + GTP = N(6)-(1,2-dicarboxyethyl)-AMP + GDP + phosphate + 2 H(+). The protein operates within purine metabolism; AMP biosynthesis via de novo pathway; AMP from IMP: step 1/2. Its function is as follows. Plays an important role in the de novo pathway and in the salvage pathway of purine nucleotide biosynthesis. Catalyzes the first committed step in the biosynthesis of AMP from IMP. The chain is Adenylosuccinate synthetase from Drosophila ananassae (Fruit fly).